Reading from the N-terminus, the 130-residue chain is Small ribosomal subunit protein uS9 (130 aa).

The protein belongs to the universal ribosomal protein uS9 family.

In Nitrosospira multiformis (strain ATCC 25196 / NCIMB 11849 / C 71), this protein is Small ribosomal subunit protein uS9.